The sequence spans 205 residues: Ribosomal RNA large subunit methyltransferase E (205 aa).

Positions 60, 62, 80, 96, and 121 each coordinate S-adenosyl-L-methionine. Lys161 serves as the catalytic Proton acceptor.

Belongs to the class I-like SAM-binding methyltransferase superfamily. RNA methyltransferase RlmE family.

It localises to the cytoplasm. The enzyme catalyses uridine(2552) in 23S rRNA + S-adenosyl-L-methionine = 2'-O-methyluridine(2552) in 23S rRNA + S-adenosyl-L-homocysteine + H(+). Functionally, specifically methylates the uridine in position 2552 of 23S rRNA at the 2'-O position of the ribose in the fully assembled 50S ribosomal subunit. This chain is Ribosomal RNA large subunit methyltransferase E, found in Chromobacterium violaceum (strain ATCC 12472 / DSM 30191 / JCM 1249 / CCUG 213 / NBRC 12614 / NCIMB 9131 / NCTC 9757 / MK).